Here is a 145-residue protein sequence, read N- to C-terminus: D-aminoacyl-tRNA deacylase (145 aa).

Positions 137–138 (GP) match the Gly-cisPro motif, important for rejection of L-amino acids motif.

Belongs to the DTD family. As to quaternary structure, homodimer.

It is found in the cytoplasm. It catalyses the reaction glycyl-tRNA(Ala) + H2O = tRNA(Ala) + glycine + H(+). The catalysed reaction is a D-aminoacyl-tRNA + H2O = a tRNA + a D-alpha-amino acid + H(+). Its function is as follows. An aminoacyl-tRNA editing enzyme that deacylates mischarged D-aminoacyl-tRNAs. Also deacylates mischarged glycyl-tRNA(Ala), protecting cells against glycine mischarging by AlaRS. Acts via tRNA-based rather than protein-based catalysis; rejects L-amino acids rather than detecting D-amino acids in the active site. By recycling D-aminoacyl-tRNA to D-amino acids and free tRNA molecules, this enzyme counteracts the toxicity associated with the formation of D-aminoacyl-tRNA entities in vivo and helps enforce protein L-homochirality. This chain is D-aminoacyl-tRNA deacylase, found in Shewanella putrefaciens (strain CN-32 / ATCC BAA-453).